Here is an 871-residue protein sequence, read N- to C-terminus: Valine--tRNA ligase (871 aa).

The 'HIGH' region signature appears at 47–57 (PNVTGRLHIGH). Residues 534–538 (KMSKS) carry the 'KMSKS' region motif. Residue lysine 537 coordinates ATP. A coiled-coil region spans residues 805–871 (DLTPILNRLN…IEEELARLTR (67 aa)).

It belongs to the class-I aminoacyl-tRNA synthetase family. ValS type 1 subfamily. In terms of assembly, monomer.

The protein localises to the cytoplasm. It catalyses the reaction tRNA(Val) + L-valine + ATP = L-valyl-tRNA(Val) + AMP + diphosphate. Catalyzes the attachment of valine to tRNA(Val). As ValRS can inadvertently accommodate and process structurally similar amino acids such as threonine, to avoid such errors, it has a 'posttransfer' editing activity that hydrolyzes mischarged Thr-tRNA(Val) in a tRNA-dependent manner. The protein is Valine--tRNA ligase of Nitratiruptor sp. (strain SB155-2).